A 67-amino-acid chain; its full sequence is Conotoxin LiC33 (67 aa).

A signal peptide spans M1 to A22. The propeptide occupies H23–I48. Position 63 is a phenylalanine amide (F63). Residues K65–K67 constitute a propeptide that is removed on maturation.

This sequence belongs to the conotoxin T superfamily. Post-translationally, contains 2 disulfide bonds that can be either 'C1-C3, C2-C4' or 'C1-C4, C2-C3', since these disulfide connectivities have been observed for conotoxins with cysteine framework V (for examples, see AC P0DQQ7 and AC P81755). As to expression, expressed by the venom duct.

The protein resides in the secreted. This Conus lividus (Livid cone) protein is Conotoxin LiC33.